A 265-amino-acid chain; its full sequence is Cytochrome c oxidase subunit 3 (265 aa).

A run of 6 helical transmembrane segments spans residues 41–61 (GGATLLSLGLIFILYTMFVWW), 85–105 (GFILFIVSEVMFFFAFFWAFF), 137–157 (TLILLSSGAAVTWAHHAILAG), 162–182 (AVYALVATVLLALVFTGFQGM), 200–220 (FFLATGFHGFHVIIGTLFLIV), and 245–265 (WHFVDVVWLFLFVSIYWWGGI).

The protein belongs to the cytochrome c oxidase subunit 3 family. As to quaternary structure, component of the cytochrome c oxidase (complex IV, CIV), a multisubunit enzyme composed of a catalytic core of 3 subunits and several supernumerary subunits. The complex exists as a monomer or a dimer and forms supercomplexes (SCs) in the inner mitochondrial membrane with ubiquinol-cytochrome c oxidoreductase (cytochrome b-c1 complex, complex III, CIII).

It is found in the mitochondrion inner membrane. The enzyme catalyses 4 Fe(II)-[cytochrome c] + O2 + 8 H(+)(in) = 4 Fe(III)-[cytochrome c] + 2 H2O + 4 H(+)(out). Component of the cytochrome c oxidase, the last enzyme in the mitochondrial electron transport chain which drives oxidative phosphorylation. The respiratory chain contains 3 multisubunit complexes succinate dehydrogenase (complex II, CII), ubiquinol-cytochrome c oxidoreductase (cytochrome b-c1 complex, complex III, CIII) and cytochrome c oxidase (complex IV, CIV), that cooperate to transfer electrons derived from NADH and succinate to molecular oxygen, creating an electrochemical gradient over the inner membrane that drives transmembrane transport and the ATP synthase. Cytochrome c oxidase is the component of the respiratory chain that catalyzes the reduction of oxygen to water. Electrons originating from reduced cytochrome c in the intermembrane space (IMS) are transferred via the dinuclear copper A center (CU(A)) of subunit 2 and heme A of subunit 1 to the active site in subunit 1, a binuclear center (BNC) formed by heme A3 and copper B (CU(B)). The BNC reduces molecular oxygen to 2 water molecules using 4 electrons from cytochrome c in the IMS and 4 protons from the mitochondrial matrix. This chain is Cytochrome c oxidase subunit 3 (COX3), found in Triticum aestivum (Wheat).